A 136-amino-acid polypeptide reads, in one-letter code: Large ribosomal subunit protein uL16 (136 aa).

The protein belongs to the universal ribosomal protein uL16 family. Part of the 50S ribosomal subunit.

Binds 23S rRNA and is also seen to make contacts with the A and possibly P site tRNAs. The sequence is that of Large ribosomal subunit protein uL16 from Wigglesworthia glossinidia brevipalpis.